Here is a 65-residue protein sequence, read N- to C-terminus: U11-theraphotoxin-Cg1a (65 aa).

The signal sequence occupies residues 1 to 21 (MKTTILLVILGLTLLFALSAA). Positions 22-29 (TELKDEER) are excised as a propeptide. 3 disulfide bridges follow: Cys-31–Cys-45, Cys-38–Cys-50, and Cys-44–Cys-57.

Belongs to the neurotoxin 10 (Hwtx-1) family. 32 (Jztx-16) subfamily. As to expression, expressed by the venom gland.

It is found in the secreted. Functionally, probable ion channel inhibitor. This chain is U11-theraphotoxin-Cg1a, found in Chilobrachys guangxiensis (Chinese earth tiger tarantula).